The sequence spans 184 residues: ATP synthase subunit delta (184 aa).

It belongs to the ATPase delta chain family. F-type ATPases have 2 components, F(1) - the catalytic core - and F(0) - the membrane proton channel. F(1) has five subunits: alpha(3), beta(3), gamma(1), delta(1), epsilon(1). F(0) has three main subunits: a(1), b(2) and c(10-14). The alpha and beta chains form an alternating ring which encloses part of the gamma chain. F(1) is attached to F(0) by a central stalk formed by the gamma and epsilon chains, while a peripheral stalk is formed by the delta and b chains.

Its subcellular location is the cell inner membrane. Functionally, f(1)F(0) ATP synthase produces ATP from ADP in the presence of a proton or sodium gradient. F-type ATPases consist of two structural domains, F(1) containing the extramembraneous catalytic core and F(0) containing the membrane proton channel, linked together by a central stalk and a peripheral stalk. During catalysis, ATP synthesis in the catalytic domain of F(1) is coupled via a rotary mechanism of the central stalk subunits to proton translocation. This protein is part of the stalk that links CF(0) to CF(1). It either transmits conformational changes from CF(0) to CF(1) or is implicated in proton conduction. The sequence is that of ATP synthase subunit delta from Rickettsia felis (strain ATCC VR-1525 / URRWXCal2) (Rickettsia azadi).